Here is a 437-residue protein sequence, read N- to C-terminus: Enolase (437 aa).

Position 162 (Q162) interacts with (2R)-2-phosphoglycerate. E204 serves as the catalytic Proton donor. Residues D251, E297, and D324 each coordinate Mg(2+). Positions 349, 378, 379, and 400 each coordinate (2R)-2-phosphoglycerate. Residue K349 is the Proton acceptor of the active site.

The protein belongs to the enolase family. It depends on Mg(2+) as a cofactor.

The protein resides in the cytoplasm. It is found in the secreted. It localises to the cell surface. It carries out the reaction (2R)-2-phosphoglycerate = phosphoenolpyruvate + H2O. The protein operates within carbohydrate degradation; glycolysis; pyruvate from D-glyceraldehyde 3-phosphate: step 4/5. Its function is as follows. Catalyzes the reversible conversion of 2-phosphoglycerate (2-PG) into phosphoenolpyruvate (PEP). It is essential for the degradation of carbohydrates via glycolysis. This chain is Enolase, found in Pelodictyon phaeoclathratiforme (strain DSM 5477 / BU-1).